A 535-amino-acid chain; its full sequence is RAN GTPase-activating protein 1 (535 aa).

A WPP region spans residues 1–115; sequence MDHSAKTTQN…EESEVEVSKD (115 aa). LRR repeat units lie at residues 208–231, 236–259, 264–287, 320–343, 353–376, 377–400, 405–428, 433–456, and 461–488; these read GSKL…AFAS, QHDL…AVRE, TDKI…AIAE, CSHL…ALAK, EIYM…LLKS, APSL…NLAA, KQSL…LIAK, HDQL…ALAQ, and KNTF…MFKD. Positions 493-535 are disordered; it reads LVPLDDNDPEGEDFEDEDEEEEGEDGNELESKLGSLKIKQGEE. Positions 497–520 are enriched in acidic residues; sequence DDNDPEGEDFEDEDEEEEGEDGNE.

The protein belongs to the RNA1 family. Homodimer. Interacts with WIP1 through its WPP domain. Component of Ran complexes at least composed of WIT1 or WIT2, RANGAP1 or RANGAP2, and WIP1 or WIP2 or WIP3. Interacts directly with WIT1, WIP2 and WIP3. Interacts with POK1.

The protein localises to the cytoplasm. It localises to the nucleus envelope. The protein resides in the nucleus membrane. It is found in the cytoskeleton. Its subcellular location is the spindle. The protein localises to the phragmoplast. GTPase activator for the nuclear Ras-related regulatory protein Ran, converting it to the putatively inactive GDP-bound state. Plays a role in spatial signaling during cell division. In Arabidopsis thaliana (Mouse-ear cress), this protein is RAN GTPase-activating protein 1 (RANGAP1).